Here is a 92-residue protein sequence, read N- to C-terminus: Bombyxin A-7 (92 aa).

The N-terminal stretch at 1–19 (MKLLLAIALMLTIVMWVST) is a signal peptide. Gln20 bears the Pyrrolidone carboxylic acid mark. Intrachain disulfides connect Cys29–Cys79, Cys41–Cys92, and Cys78–Cys83. The propeptide at 50 to 70 (SDAQYASYGSAWLMPYSEGRG) is c peptide like.

This sequence belongs to the insulin family. Heterodimer of a B chain and an A chain linked by two disulfide bonds.

It is found in the secreted. In terms of biological role, brain peptide responsible for activation of prothoracic glands to produce ecdysone in insects. The protein is Bombyxin A-7 (BBXA7) of Bombyx mori (Silk moth).